We begin with the raw amino-acid sequence, 204 residues long: Casparian strip membrane protein 3 (204 aa).

Over 1 to 41 the chain is Cytoplasmic; sequence MKNESTFIDVPADSSSAMKGKAPLIGVAKDHTASGSGGYNR. Residues 42–62 form a helical membrane-spanning segment; sequence GLSIFDFLLRLAAIVAASVAA. At 63–92 the chain is on the extracellular side; sequence GTMFTSDETLPFFTQFLQFQAGYDDLPTFQ. Residues 93 to 113 form a helical membrane-spanning segment; the sequence is FFVISMSLVSGYIVLSLPISV. At 114 to 125 the chain is on the cytoplasmic side; it reads VTIVRPLAAAPR. A helical membrane pass occupies residues 126–146; sequence LLLLVLDTAVMGLTMAAASSA. Topologically, residues 147–204 are extracellular; the sequence is AAISYVAHNGNQNTNWLPICQQFGDFCQKTSGGCGLFLCRRRVFHDPGCPLRSRSQRH.

Belongs to the Casparian strip membrane proteins (CASP) family. As to quaternary structure, homodimer and heterodimers.

It localises to the cell membrane. In terms of biological role, regulates membrane-cell wall junctions and localized cell wall deposition. Required for establishment of the Casparian strip membrane domain (CSD) and the subsequent formation of Casparian strips, a cell wall modification of the root endodermis that determines an apoplastic barrier between the intraorganismal apoplasm and the extraorganismal apoplasm and prevents lateral diffusion. The protein is Casparian strip membrane protein 3 of Raphanus sativus (Radish).